Here is a 1077-residue protein sequence, read N- to C-terminus: ATP-dependent DNA helicase MPH1 (1077 aa).

In terms of domain architecture, Helicase ATP-binding spans 99–266 (IVHRALFENV…EVVDNLQISK (168 aa)). Residue 112–119 (IPTGMGKT) coordinates ATP. The DEAH box motif lies at 214–217 (DEAH). In terms of domain architecture, Helicase C-terminal spans 511–660 (KKVDRIRRLE…SLNYKVTDRI (150 aa)). 2 disordered regions span residues 536–556 (EKLARTARRTGSSEEAQISGM) and 831–859 (TLSSDNKSTPDQLKRSQSDNGFGIPPKRQ). Polar residues predominate over residues 831–841 (TLSSDNKSTPD).

The protein belongs to the DEAD box helicase family. DEAH subfamily. FANCM sub-subfamily. In terms of assembly, interacts with the MHF histone-fold complex to form the FANCM-MHF complex.

It localises to the nucleus. The enzyme catalyses ATP + H2O = ADP + phosphate + H(+). ATP-dependent DNA helicase involved in DNA damage repair by homologous recombination and in genome maintenance. Capable of unwinding D-loops. Plays a role in limiting crossover recombinants during mitotic DNA double-strand break (DSB) repair. Component of a FANCM-MHF complex which promotes gene conversion at blocked replication forks, probably by reversal of the stalled fork. The protein is ATP-dependent DNA helicase MPH1 of Eremothecium gossypii (strain ATCC 10895 / CBS 109.51 / FGSC 9923 / NRRL Y-1056) (Yeast).